The primary structure comprises 472 residues: Protein c-ets-2-B (472 aa).

Residues 85-170 (DTFNGFAKER…EHLEEMMKEY (86 aa)) enclose the PNT domain. Positions 366–446 (IQLWQFLLEL…SGKRYVYRFV (81 aa)) form a DNA-binding region, ETS.

Belongs to the ETS family.

Its subcellular location is the nucleus. Probable transcription factor. The sequence is that of Protein c-ets-2-B (ets2-b) from Xenopus laevis (African clawed frog).